The following is a 123-amino-acid chain: RxLR effector protein Avh262 (123 aa).

The signal sequence occupies residues 1–18; it reads MLPVAVVLVVFAVAVTSA. A disordered region spans residues 24 to 46; it reads VNPLPRRRRLKGTEEKGHHTNVN. The short motif at 30–50 is the RxLR-dEER element; that stretch reads RRRLKGTEEKGHHTNVNDEER. A compositionally biased stretch (basic and acidic residues) spans 34–46; it reads KGTEEKGHHTNVN. Residues 60-82 are biP-binding; that stretch reads LISKLKVKINAKLLAGDSAKPAT.

Belongs to the RxLR effector family. Interacts with host plant ER-luminal binding immunoglobulin proteins (BiPs) such as soybean BiP1, BiP2, BiP3 and BiP4.

It is found in the secreted. The protein localises to the host endoplasmic reticulum. Effector that suppresses plant defense responses during the early stages of pathogen infection. Suppresses cell death induced by effectors and PAMPs in plant hosts. Avh262 stabilizes endoplasmic reticulum (ER)-luminal binding immunoglobulin proteins (BiPs), which act as negative regulators of plant resistance to Phytophthora. By stabilizing BiPs, Avh262 suppresses ER stress-triggered cell death and facilitates Phytophthora infection. In Phytophthora sojae (Soybean stem and root rot agent), this protein is RxLR effector protein Avh262.